The sequence spans 294 residues: MPAYSSLARRGRRPAVVLLGGLVSASLALTLAPTAAAAPLAPPPGKDVGPGEAYMGVGTRIEQGLGAGPDERTIGPADTSGVQGIDVSHWQGSINWSSVKSAGMSFAYIKATEGTNYKDDRFSANYTNAYNAGIIRGAYHFARPNASSGTAQADYFASNGGGWSRDNRTLPGVLDIEHNPSGAMCYGLSTTQMRTWINDFHARYKARTTRDVVIYTTASWWNTCTGSWNGMAAKSPFWVAHWGVSAPTVPSGFPTWTFWQYSATGRVGGVSGDVDRNKFNGSAARLLALANNTA.

The 214-residue stretch at 81-294 folds into the Ch-type lysozyme domain; it reads GVQGIDVSHW…RLLALANNTA (214 aa). Catalysis depends on residues D86, D175, and E177. C185 and C224 are disulfide-bonded.

This sequence belongs to the glycosyl hydrolase 25 family.

The protein resides in the secreted. It catalyses the reaction Hydrolysis of (1-&gt;4)-beta-linkages between N-acetylmuramic acid and N-acetyl-D-glucosamine residues in a peptidoglycan and between N-acetyl-D-glucosamine residues in chitodextrins.. Functionally, this enzyme has both lysozyme (acetylmuramidase) and diacetylmuramidase activities. The polypeptide is Lysozyme M1 (acm) (Streptomyces globisporus).